The sequence spans 504 residues: Cytochrome P450 6B2 (504 aa).

Residue cysteine 445 participates in heme binding.

Belongs to the cytochrome P450 family. Requires heme as cofactor.

Its subcellular location is the endoplasmic reticulum membrane. It is found in the microsome membrane. The catalysed reaction is an organic molecule + reduced [NADPH--hemoprotein reductase] + O2 = an alcohol + oxidized [NADPH--hemoprotein reductase] + H2O + H(+). This is Cytochrome P450 6B2 (CYP6B2) from Helicoverpa armigera (Cotton bollworm).